The chain runs to 196 residues: UDP-N-acetylglucosamine transferase subunit ALG13 (196 aa).

Belongs to the glycosyltransferase 28 family. As to quaternary structure, heterodimer with ALG14 to form a functional enzyme.

The protein localises to the endoplasmic reticulum. The catalysed reaction is an N-acetyl-alpha-D-glucosaminyl-diphospho-di-trans,poly-cis-dolichol + UDP-N-acetyl-alpha-D-glucosamine = an N,N'-diacetylchitobiosyl-diphospho-di-trans,poly-cis-dolichol + UDP + H(+). Its function is as follows. Involved in protein N-glycosylation. Essential for the second step of the dolichol-linked oligosaccharide pathway. This chain is UDP-N-acetylglucosamine transferase subunit ALG13 (ALG13), found in Yarrowia lipolytica (strain CLIB 122 / E 150) (Yeast).